Reading from the N-terminus, the 183-residue chain is Translation initiation factor IF-3 (183 aa).

This sequence belongs to the IF-3 family. In terms of assembly, monomer.

It is found in the cytoplasm. IF-3 binds to the 30S ribosomal subunit and shifts the equilibrium between 70S ribosomes and their 50S and 30S subunits in favor of the free subunits, thus enhancing the availability of 30S subunits on which protein synthesis initiation begins. The sequence is that of Translation initiation factor IF-3 from Pseudomonas fluorescens (strain SBW25).